We begin with the raw amino-acid sequence, 607 residues long: Chaperone protein HtpG (607 aa).

Residues 1–323 form an a; substrate-binding region; that stretch reads MKKEEKIFKA…CDSLSLNISR (323 aa). Positions 324-534 are b; sequence EILQQNAELQ…KGGLSLEMEK (211 aa). A c region spans residues 535 to 607; sequence TLSEMTNNND…FIKNLNSLIK (73 aa).

The protein belongs to the heat shock protein 90 family. As to quaternary structure, homodimer.

It localises to the cytoplasm. Functionally, molecular chaperone. Has ATPase activity. In Fusobacterium nucleatum subsp. nucleatum (strain ATCC 25586 / DSM 15643 / BCRC 10681 / CIP 101130 / JCM 8532 / KCTC 2640 / LMG 13131 / VPI 4355), this protein is Chaperone protein HtpG.